The chain runs to 192 residues: MTNSPITEPSPRQESVLRYPVLGSRRPSNYFWATAVSIGGLGFFLAGLSSYLHRNLLPIGNPIDLVFIPQGIAIGFYGVAALLLATYLWLAIAWDVGGGFNEFNKETGFVRIFRWGFPGKNRQIEVSCPISDVQAVKIVIKEGLNPKRSLYLKIKGRGEVPLTRVGAPLPLAELETQGATIASFLGVPVEGL.

2 helical membrane passes run 30–52 and 72–94; these read YFWA…SSYL and IAIG…AIAW.

It belongs to the Ycf4 family.

Its subcellular location is the cellular thylakoid membrane. Functionally, seems to be required for the assembly of the photosystem I complex. This Thermosynechococcus vestitus (strain NIES-2133 / IAM M-273 / BP-1) protein is Photosystem I assembly protein Ycf4.